A 1216-amino-acid chain; its full sequence is DNA polymerase subunit gamma-1 (1216 aa).

The span at 27-37 (SSSVLDPVPSD) shows a compositional bias: low complexity. A disordered region spans residues 27 to 50 (SSSVLDPVPSDGQPQSQMPSSENG). The segment covering 38-50 (GQPQSQMPSSENG) has biased composition (polar residues). The Exo I motif lies at 179–183 (VFDVE). The active-site Exonuclease activity is Asp181. The Exo II motif lies at 250–258 (VGHNVSFDR). Ser289 lines the DNA pocket. A compositionally biased stretch (basic residues) spans 301–314 (GKHKTQHPTKRGQK). The interval 301 to 321 (GKHKTQHPTKRGQKSQKNANG) is disordered. Positions 377–385 (YCARDVWAT) match the Exo III motif. The interval 488-518 (TASASKLPIEGAGPFGDPMDQEDPGPPSEEE) is disordered. An accessory-interacting determinant region spans residues 491 to 552 (ASKLPIEGAG…RPQHLPGHPG (62 aa)). Over residues 506–518 (MDQEDPGPPSEEE) the composition is skewed to acidic residues. Arg560 lines the RNA pocket. Residue Ser574 participates in DNA binding. Residues His731, Gly740, and Lys745 each coordinate RNA. DNA contacts are provided by Lys783 and Thr826. Residues 835 to 841 (TWLTASN) form a trigger loop region. Residues Ser840 and Arg846 each coordinate RNA. The Pol A signature appears at 864 to 873 (VGADVDSQEL). Residues Asp867, Val868, Ser870, Glu872, Arg920, Lys924, and Tyr928 each coordinate a 2'-deoxyribonucleoside 5'-triphosphate. 2 residues coordinate Mg(2+): Asp867 and Val868. Residues 920-935 (REHAKVFNYGRIYGAG) carry the Pol B motif. The DNA site is built by Thr1071 and Ser1072. The Pol C signature appears at 1111 to 1118 (HDEVRYLV). Position 1112 (Asp1112) interacts with a 2'-deoxyribonucleoside 5'-triphosphate. Asp1112 contributes to the Mg(2+) binding site.

Belongs to the DNA polymerase type-A family. As to quaternary structure, heterotrimer composed of a catalytic subunit and a homodimer of accessory subunits (POLG:POLG2). Interacts with TTC3. Interacts with LIG3. It depends on Mg(2+) as a cofactor.

Its subcellular location is the mitochondrion. It localises to the mitochondrion matrix. It is found in the mitochondrion nucleoid. It carries out the reaction DNA(n) + a 2'-deoxyribonucleoside 5'-triphosphate = DNA(n+1) + diphosphate. The catalysed reaction is a 3'-end 2'-deoxyribonucleotidyl-deoxyribonucleotide-DNA + H2O = a 3'-end 2'-deoxyribonucleotide-DNA + a 2'-deoxyribonucleoside 5'-phosphate + H(+). It catalyses the reaction a 5'-end 2'-deoxyribose-2'-deoxyribonucleotide-DNA = (2E,4S)-4-hydroxypenten-2-al-5-phosphate + a 5'-end 5'-phospho-2'-deoxyribonucleoside-DNA + H(+). With respect to regulation, inhibited by dideoxynucleotides such as antiviral agent zalcitabine. In terms of biological role, catalytic subunit of DNA polymerase gamma solely responsible for replication of mitochondrial DNA (mtDNA). Replicates both heavy and light strands of the circular mtDNA genome using a single-stranded DNA template, RNA primers and the four deoxyribonucleoside triphosphates as substrates. Has 5' -&gt; 3' polymerase activity. Functionally interacts with TWNK and SSBP1 at the replication fork to form a highly processive replisome, where TWNK unwinds the double-stranded DNA template prior to replication and SSBP1 covers the parental heavy strand to enable continuous replication of the entire mitochondrial genome. A single nucleotide incorporation cycle includes binding of the incoming nucleotide at the insertion site, a phosphodiester bond formation reaction that extends the 3'-end of the primer DNA, and translocation of the primer terminus to the post-insertion site. After completing replication of a mtDNA strand, mediates 3' -&gt; 5' exonucleolytic degradation at the nick to enable proper ligation. Highly accurate due to high nucleotide selectivity and 3' -&gt; 5' exonucleolytic proofreading. Proficiently corrects base substitutions, single-base additions and deletions in non-repetitive sequences and short repeats, but displays lower proofreading activity when replicating longer homopolymeric stretches. Exerts exonuclease activity toward single-stranded DNA and double-stranded DNA containing 3'-terminal mispairs. When a misincorporation occurs, transitions from replication to a pro-nucleolytic editing mode and removes the missincorporated nucleoside in the exonuclease active site. Proceeds via an SN2 nucleolytic mechanism in which Asp-198 catalyzes phosphodiester bond hydrolysis and Glu-200 stabilizes the leaving group. As a result the primer strand becomes one nucleotide shorter and is positioned in the post-insertion site, ready to resume DNA synthesis. Exerts 5'-deoxyribose phosphate (dRP) lyase activity and mediates repair-associated mtDNA synthesis (gap filling) in base-excision repair pathway. Catalyzes the release of the 5'-terminal 2-deoxyribose-5-phosphate sugar moiety from incised apurinic/apyrimidinic (AP) sites to produce a substrate for DNA ligase. The dRP lyase reaction does not require divalent metal ions and likely proceeds via a Schiff base intermediate in a beta-elimination reaction mechanism. This chain is DNA polymerase subunit gamma-1, found in Rattus norvegicus (Rat).